We begin with the raw amino-acid sequence, 304 residues long: Aspartate carbamoyltransferase catalytic subunit (304 aa).

Positions 57 and 58 each coordinate carbamoyl phosphate. Lys-86 provides a ligand contact to L-aspartate. Carbamoyl phosphate is bound by residues Arg-107, His-135, and Gln-138. Residues Arg-168 and Arg-229 each coordinate L-aspartate. Leu-266 and Pro-267 together coordinate carbamoyl phosphate.

This sequence belongs to the aspartate/ornithine carbamoyltransferase superfamily. ATCase family. As to quaternary structure, heterooligomer of catalytic and regulatory chains.

The catalysed reaction is carbamoyl phosphate + L-aspartate = N-carbamoyl-L-aspartate + phosphate + H(+). The protein operates within pyrimidine metabolism; UMP biosynthesis via de novo pathway; (S)-dihydroorotate from bicarbonate: step 2/3. Catalyzes the condensation of carbamoyl phosphate and aspartate to form carbamoyl aspartate and inorganic phosphate, the committed step in the de novo pyrimidine nucleotide biosynthesis pathway. The chain is Aspartate carbamoyltransferase catalytic subunit from Methanosphaera stadtmanae (strain ATCC 43021 / DSM 3091 / JCM 11832 / MCB-3).